The following is a 229-amino-acid chain: Uracil-DNA glycosylase (229 aa).

Residue Asp65 is the Proton acceptor of the active site.

This sequence belongs to the uracil-DNA glycosylase (UDG) superfamily. UNG family.

The protein localises to the cytoplasm. It catalyses the reaction Hydrolyzes single-stranded DNA or mismatched double-stranded DNA and polynucleotides, releasing free uracil.. Functionally, excises uracil residues from the DNA which can arise as a result of misincorporation of dUMP residues by DNA polymerase or due to deamination of cytosine. The sequence is that of Uracil-DNA glycosylase from Limosilactobacillus fermentum (strain NBRC 3956 / LMG 18251) (Lactobacillus fermentum).